Reading from the N-terminus, the 72-residue chain is Exodeoxyribonuclease 7 small subunit (72 aa).

This sequence belongs to the XseB family. Heterooligomer composed of large and small subunits.

It localises to the cytoplasm. It catalyses the reaction Exonucleolytic cleavage in either 5'- to 3'- or 3'- to 5'-direction to yield nucleoside 5'-phosphates.. In terms of biological role, bidirectionally degrades single-stranded DNA into large acid-insoluble oligonucleotides, which are then degraded further into small acid-soluble oligonucleotides. The chain is Exodeoxyribonuclease 7 small subunit from Chlamydia trachomatis serovar D (strain ATCC VR-885 / DSM 19411 / UW-3/Cx).